A 434-amino-acid chain; its full sequence is Glutamate-1-semialdehyde 2,1-aminomutase (434 aa).

At Lys-273 the chain carries N6-(pyridoxal phosphate)lysine.

It belongs to the class-III pyridoxal-phosphate-dependent aminotransferase family. HemL subfamily. In terms of assembly, homodimer. The cofactor is pyridoxal 5'-phosphate.

Its subcellular location is the cytoplasm. It catalyses the reaction (S)-4-amino-5-oxopentanoate = 5-aminolevulinate. It participates in porphyrin-containing compound metabolism; protoporphyrin-IX biosynthesis; 5-aminolevulinate from L-glutamyl-tRNA(Glu): step 2/2. The sequence is that of Glutamate-1-semialdehyde 2,1-aminomutase from Polynucleobacter asymbioticus (strain DSM 18221 / CIP 109841 / QLW-P1DMWA-1) (Polynucleobacter necessarius subsp. asymbioticus).